Reading from the N-terminus, the 1369-residue chain is DNA-directed RNA polymerase subunit beta' (1369 aa).

Positions 1-26 are disordered; it reads MTSSSPKTRKSSTKSKAKRGSKSKKA. Residues 7–24 are compositionally biased toward basic residues; the sequence is KTRKSSTKSKAKRGSKSK. Residues cysteine 253, cysteine 320, cysteine 327, and cysteine 330 each coordinate Zn(2+). The disordered stretch occupies residues 1294–1369; the sequence is TVDMPSSPVA…LQEEGLLSDE (76 aa). The span at 1342-1351 shows a compositional bias: acidic residues; that stretch reads DDELSAEDQM. Low complexity predominate over residues 1357–1369; the sequence is LEGLQEEGLLSDE.

Belongs to the RNA polymerase beta' chain family. RpoC2 subfamily. In cyanobacteria the RNAP catalytic core is composed of 2 alpha, 1 beta, 1 beta', 1 gamma and 1 omega subunit. When a sigma factor is associated with the core the holoenzyme is formed, which can initiate transcription. It depends on Zn(2+) as a cofactor.

It catalyses the reaction RNA(n) + a ribonucleoside 5'-triphosphate = RNA(n+1) + diphosphate. DNA-dependent RNA polymerase catalyzes the transcription of DNA into RNA using the four ribonucleoside triphosphates as substrates. This chain is DNA-directed RNA polymerase subunit beta', found in Prochlorococcus marinus (strain NATL2A).